Consider the following 237-residue polypeptide: 2,3,4,5-tetrahydropyridine-2,6-dicarboxylate N-acetyltransferase (237 aa).

This sequence belongs to the transferase hexapeptide repeat family. DapH subfamily.

It catalyses the reaction (S)-2,3,4,5-tetrahydrodipicolinate + acetyl-CoA + H2O = L-2-acetamido-6-oxoheptanedioate + CoA. The protein operates within amino-acid biosynthesis; L-lysine biosynthesis via DAP pathway; LL-2,6-diaminopimelate from (S)-tetrahydrodipicolinate (acetylase route): step 1/3. Functionally, catalyzes the transfer of an acetyl group from acetyl-CoA to tetrahydrodipicolinate. This chain is 2,3,4,5-tetrahydropyridine-2,6-dicarboxylate N-acetyltransferase, found in Alkaliphilus metalliredigens (strain QYMF).